The primary structure comprises 216 residues: 3-isopropylmalate dehydratase small subunit (216 aa).

Belongs to the LeuD family. LeuD type 1 subfamily. In terms of assembly, heterodimer of LeuC and LeuD.

The enzyme catalyses (2R,3S)-3-isopropylmalate = (2S)-2-isopropylmalate. Its pathway is amino-acid biosynthesis; L-leucine biosynthesis; L-leucine from 3-methyl-2-oxobutanoate: step 2/4. In terms of biological role, catalyzes the isomerization between 2-isopropylmalate and 3-isopropylmalate, via the formation of 2-isopropylmaleate. The polypeptide is 3-isopropylmalate dehydratase small subunit (Burkholderia mallei (strain NCTC 10247)).